The sequence spans 801 residues: Mitochondrial intermediate peptidase (801 aa).

The transit peptide at 1–41 (MKPQLLTPLRRRPWTCRQCLQRLQRLQQQTRRSFETAASPA) directs the protein to the mitochondrion. The tract at residues 31-54 (RRSFETAASPAPGHTQVDYIPADA) is disordered. Histidine 565 is a Zn(2+) binding site. The active site involves glutamate 566. Residues histidine 569 and histidine 572 each contribute to the Zn(2+) site.

Belongs to the peptidase M3 family. Requires Zn(2+) as cofactor.

It is found in the mitochondrion matrix. The catalysed reaction is Release of an N-terminal octapeptide as second stage of processing of some proteins imported into the mitochondrion.. Functionally, cleaves proteins, imported into the mitochondrion, to their mature size. While most mitochondrial precursor proteins are processed to the mature form in one step by mitochondrial processing peptidase (MPP), the sequential cleavage by MIP of an octapeptide after initial processing by MPP is a required step for a subgroup of nuclear-encoded precursor proteins destined for the matrix or the inner membrane. The sequence is that of Mitochondrial intermediate peptidase (oct1) from Aspergillus clavatus (strain ATCC 1007 / CBS 513.65 / DSM 816 / NCTC 3887 / NRRL 1 / QM 1276 / 107).